Reading from the N-terminus, the 371-residue chain is Cytochrome b (371 aa).

A run of 4 helical transmembrane segments spans residues 25-45 (FGSM…FLAV), 69-90 (WMMQ…YIHI), 105-125 (WMSG…GYVL), and 170-190 (FFAL…LHII). Heme b is bound by residues H75 and H89. Residues H174 and H188 each contribute to the heme b site. Residue H193 participates in a ubiquinone binding. 4 consecutive transmembrane segments (helical) span residues 218–238 (HKDL…VSFS), 280–300 (LGGA…PFTH), 312–332 (LSQL…WAAT), and 339–358 (FIII…LSIP).

The protein belongs to the cytochrome b family. The cytochrome bc1 complex contains 3 respiratory subunits (MT-CYB, CYC1 and UQCRFS1), 2 core proteins (UQCRC1 and UQCRC2) and probably 6 low-molecular weight proteins. The cofactor is heme b.

The protein localises to the mitochondrion inner membrane. Functionally, component of the ubiquinol-cytochrome c reductase complex (complex III or cytochrome b-c1 complex) that is part of the mitochondrial respiratory chain. The b-c1 complex mediates electron transfer from ubiquinol to cytochrome c. Contributes to the generation of a proton gradient across the mitochondrial membrane that is then used for ATP synthesis. In Antaresia childreni (Children's python), this protein is Cytochrome b (MT-CYB).